A 134-amino-acid chain; its full sequence is Profilin-2 (134 aa).

Cys13 and Cys118 are oxidised to a cystine. Positions 84-100 (AVIRGKKGSGGITIKKT) match the Involved in PIP2 interaction motif. Residue Thr114 is modified to Phosphothreonine.

It belongs to the profilin family. In terms of assembly, occurs in many kinds of cells as a complex with monomeric actin in a 1:1 ratio. Post-translationally, phosphorylated by MAP kinases.

The protein resides in the cytoplasm. It localises to the cytoskeleton. Functionally, binds to actin and affects the structure of the cytoskeleton. At high concentrations, profilin prevents the polymerization of actin, whereas it enhances it at low concentrations. The polypeptide is Profilin-2 (Olea europaea (Common olive)).